A 397-amino-acid chain; its full sequence is Riboflavin biosynthesis protein RibBA (397 aa).

The interval 1–199 (MFHRIEEALE…IEDLIAYRRH (199 aa)) is DHBP synthase. D-ribulose 5-phosphate contacts are provided by residues 26–27 (RE), D31, 138–142 (RAGHT), and E162. Residue E27 participates in Mg(2+) binding. Residue H141 participates in Mg(2+) binding. Residues 200-397 (HETFVTKEVE…VTKLGHLLNL (198 aa)) form a GTP cyclohydrolase II region. 250 to 254 (RVHSE) serves as a coordination point for GTP. Zn(2+)-binding residues include C255, C266, and C268. Residues Q271, 293 to 295 (EGR), and T315 contribute to the GTP site. Residue D327 is the Proton acceptor; for GTP cyclohydrolase activity of the active site. R329 acts as the Nucleophile; for GTP cyclohydrolase activity in catalysis. T350 and K355 together coordinate GTP.

It in the N-terminal section; belongs to the DHBP synthase family. This sequence in the C-terminal section; belongs to the GTP cyclohydrolase II family. It depends on Mg(2+) as a cofactor. Mn(2+) serves as cofactor. The cofactor is Zn(2+).

The catalysed reaction is D-ribulose 5-phosphate = (2S)-2-hydroxy-3-oxobutyl phosphate + formate + H(+). It catalyses the reaction GTP + 4 H2O = 2,5-diamino-6-hydroxy-4-(5-phosphoribosylamino)-pyrimidine + formate + 2 phosphate + 3 H(+). It functions in the pathway cofactor biosynthesis; riboflavin biosynthesis; 2-hydroxy-3-oxobutyl phosphate from D-ribulose 5-phosphate: step 1/1. Its pathway is cofactor biosynthesis; riboflavin biosynthesis; 5-amino-6-(D-ribitylamino)uracil from GTP: step 1/4. Its function is as follows. Catalyzes the conversion of D-ribulose 5-phosphate to formate and 3,4-dihydroxy-2-butanone 4-phosphate. In terms of biological role, catalyzes the conversion of GTP to 2,5-diamino-6-ribosylamino-4(3H)-pyrimidinone 5'-phosphate (DARP), formate and pyrophosphate. The chain is Riboflavin biosynthesis protein RibBA from Bacillus cytotoxicus (strain DSM 22905 / CIP 110041 / 391-98 / NVH 391-98).